Here is a 494-residue protein sequence, read N- to C-terminus: Endoglucanase 22 (494 aa).

The signal sequence occupies residues 1 to 21; sequence MKPLVCSFIVILLILLPTTIS. Asp76 (nucleophile) is an active-site residue. The active site involves His413. Asn468 carries an N-linked (GlcNAc...) asparagine glycan. Residue Glu473 is part of the active site.

This sequence belongs to the glycosyl hydrolase 9 (cellulase E) family.

The protein localises to the secreted. It carries out the reaction Endohydrolysis of (1-&gt;4)-beta-D-glucosidic linkages in cellulose, lichenin and cereal beta-D-glucans.. This Arabidopsis thaliana (Mouse-ear cress) protein is Endoglucanase 22 (GH9B16).